Here is a 331-residue protein sequence, read N- to C-terminus: ESX-3 secretion system protein EccE3 (331 aa).

A run of 2 helical transmembrane segments spans residues 11–31 (GRVT…PWQS) and 37–57 (LLGV…GLYF).

It belongs to the EccE family. In terms of assembly, part of the ESX-3 / type VII secretion system (T7SS), which is composed of cytosolic and membrane components. The ESX-3 membrane complex is composed of EccB3, EccC3, EccD3 and EccE3.

It localises to the cell inner membrane. Functionally, part of the ESX-3 specialized secretion system, which is important for iron and zinc uptake or homeostasis. In Mycobacterium tuberculosis (strain CDC 1551 / Oshkosh), this protein is ESX-3 secretion system protein EccE3.